The following is a 270-amino-acid chain: Glucosamine-6-phosphate deaminase (270 aa).

The active-site Proton acceptor; for enolization step is the Asp-68. Asp-145 acts as the For ring-opening step in catalysis. The active-site Proton acceptor; for ring-opening step is His-147. The active-site For ring-opening step is the Glu-152.

The protein belongs to the glucosamine/galactosamine-6-phosphate isomerase family. NagB subfamily.

It carries out the reaction alpha-D-glucosamine 6-phosphate + H2O = beta-D-fructose 6-phosphate + NH4(+). The protein operates within amino-sugar metabolism; N-acetylneuraminate degradation; D-fructose 6-phosphate from N-acetylneuraminate: step 5/5. Functionally, catalyzes the reversible isomerization-deamination of glucosamine 6-phosphate (GlcN6P) to form fructose 6-phosphate (Fru6P) and ammonium ion. The polypeptide is Glucosamine-6-phosphate deaminase (Bifidobacterium longum subsp. infantis (strain ATCC 15697 / DSM 20088 / JCM 1222 / NCTC 11817 / S12)).